A 204-amino-acid chain; its full sequence is High frequency lysogenization protein HflD homolog (204 aa).

It belongs to the HflD family.

It localises to the cytoplasm. It is found in the cell inner membrane. The polypeptide is High frequency lysogenization protein HflD homolog (Shewanella sediminis (strain HAW-EB3)).